The chain runs to 481 residues: Matrix metalloproteinase-20 (481 aa).

A signal peptide spans 1-20; that stretch reads MLPASGLAVLLVTALKFSTA. The propeptide occupies 21–105; it reads APSLPAASPR…PRCGVPDVAN (85 aa). Residue Asn-64 is glycosylated (N-linked (GlcNAc...) asparagine). The short motif at 96-103 is the Cysteine switch element; that stretch reads PRCGVPDV. Cys-98 contacts Zn(2+). The Ca(2+) site is built by Glu-162, Ala-163, and Asp-164. Positions 174 and 176 each coordinate Zn(2+). 4 residues coordinate Ca(2+): Asp-181, Gly-182, Arg-184, and Thr-186. His-189 contacts Zn(2+). Ca(2+) contacts are provided by Glu-195, Gly-196, Gly-198, and Asp-200. Residue His-202 coordinates Zn(2+). Residues Asp-204 and Glu-207 each coordinate Ca(2+). His-224 is a binding site for Zn(2+). Glu-225 is a catalytic residue. Positions 228 and 234 each coordinate Zn(2+). Hemopexin repeat units lie at residues 291 to 341, 342 to 387, 389 to 437, and 438 to 481; these read PDLC…FPQL, MSNV…GFPR, VQRI…FSGV, and NGQI…WIGC. A disulfide bridge links Cys-294 with Cys-481. A glycan (N-linked (GlcNAc...) asparagine) is linked at Asn-297.

This sequence belongs to the peptidase M10A family. Zn(2+) serves as cofactor. The cofactor is Ca(2+). In terms of processing, autoactivates at least at the 105-Asn-|-Tyr-106 site. As to expression, expressed in the enamel organ.

The protein resides in the secreted. It localises to the extracellular space. The protein localises to the extracellular matrix. Functionally, degrades amelogenin, the major protein component of the enamel matrix and two of the macromolecules characterizing the cartilage extracellular matrix: aggrecan and the cartilage oligomeric matrix protein (COMP). May play a central role in tooth enamel formation. Cleaves aggrecan at the '360-Ser-|-Phe-361' site. The protein is Matrix metalloproteinase-20 (MMP20) of Bos taurus (Bovine).